A 174-amino-acid polypeptide reads, in one-letter code: Crossover junction endodeoxyribonuclease RuvC (174 aa).

Catalysis depends on residues Asp-8, Glu-67, and Asp-139. Residues Asp-8, Glu-67, and Asp-139 each contribute to the Mg(2+) site.

This sequence belongs to the RuvC family. Homodimer which binds Holliday junction (HJ) DNA. The HJ becomes 2-fold symmetrical on binding to RuvC with unstacked arms; it has a different conformation from HJ DNA in complex with RuvA. In the full resolvosome a probable DNA-RuvA(4)-RuvB(12)-RuvC(2) complex forms which resolves the HJ. Mg(2+) serves as cofactor.

Its subcellular location is the cytoplasm. The enzyme catalyses Endonucleolytic cleavage at a junction such as a reciprocal single-stranded crossover between two homologous DNA duplexes (Holliday junction).. Functionally, the RuvA-RuvB-RuvC complex processes Holliday junction (HJ) DNA during genetic recombination and DNA repair. Endonuclease that resolves HJ intermediates. Cleaves cruciform DNA by making single-stranded nicks across the HJ at symmetrical positions within the homologous arms, yielding a 5'-phosphate and a 3'-hydroxyl group; requires a central core of homology in the junction. The consensus cleavage sequence is 5'-(A/T)TT(C/G)-3'. Cleavage occurs on the 3'-side of the TT dinucleotide at the point of strand exchange. HJ branch migration catalyzed by RuvA-RuvB allows RuvC to scan DNA until it finds its consensus sequence, where it cleaves and resolves the cruciform DNA. In Stutzerimonas stutzeri (strain A1501) (Pseudomonas stutzeri), this protein is Crossover junction endodeoxyribonuclease RuvC.